The primary structure comprises 392 residues: 6-aminohexanoate-dimer hydrolase (392 aa).

Residues 1-22 (MNARSTGQHPARYPGAAAGEPT) are disordered. S112 is an active-site residue.

The enzyme catalyses [N-(6-aminohexanoyl)](n) + H2O = [N-(6-aminohexanoyl)](n-1) + 6-aminohexanoate. It catalyses the reaction N-(6-aminohexanoyl)-6-aminohexanoate + H2O = 2 6-aminohexanoate. Its pathway is xenobiotic degradation; nylon-6 oligomer degradation. Involved in nylon oligomer degradation. In Paenarthrobacter ureafaciens, this protein is 6-aminohexanoate-dimer hydrolase.